The sequence spans 517 residues: Putative pumilio homolog 21 (517 aa).

Disordered regions lie at residues 33 to 57, 69 to 94, 107 to 130, and 175 to 201; these read NHQEPGESGNTNINSNNNHPNPPLL, KNNQEPGESGNTTINRNKNHPNPPLV, NHQEPGESGTTNINNNNPNPPLLT, and FTPSSLTQPDDSSSRYSGKPFPPPPLS. A compositionally biased stretch (low complexity) spans 42–51; it reads NTNINSNNNH. The segment covering 69 to 84 has biased composition (polar residues); that stretch reads KNNQEPGESGNTTINR. Residues 148–502 form the PUM-HD domain; sequence ESSNNNYPNL…NTLRVIQEEI (355 aa). Positions 177 to 190 are enriched in polar residues; that stretch reads PSSLTQPDDSSSRY. One copy of the Pumilio 1; degenerate repeat lies at 258-293; sequence TTKRIFLHLATNQYGSQALRILFRRSPSLDHLLFCA. The stretch at 294-328 is one Pumilio 2 repeat; the sequence is VDTNFFLLMSDKYGRGLIIPAIRAVDKTKKESLYK. A Pumilio 3; degenerate repeat occupies 329-363; it reads LTYEYTLHLARLETGCLALNNVLQEIRGIYRDLIF. 3 Pumilio repeats span residues 364 to 400, 401 to 437, and 438 to 473; these read ECVANNADWLSFDPYGTHVVQNILILQNPVATTAIAE, RLRGSFFRLAMERQGSYVVEKCLKSDFARDQVLEEFR, and GNAKEWVRMTTDKFGNFVVQSALRVMKEKEMRPLLR.

Its subcellular location is the cytoplasm. Its function is as follows. Sequence-specific RNA-binding protein that regulates translation and mRNA stability by binding the 3'-UTR of target mRNAs. The protein is Putative pumilio homolog 21 (APUM21) of Arabidopsis thaliana (Mouse-ear cress).